Here is a 257-residue protein sequence, read N- to C-terminus: Glutamate racemase (257 aa).

Substrate is bound by residues 12–13 (DS) and 44–45 (YG). The Proton donor/acceptor role is filled by Cys-75. 76 to 77 (NT) provides a ligand contact to substrate. The Proton donor/acceptor role is filled by Cys-185. 186-187 (TH) contacts substrate.

It belongs to the aspartate/glutamate racemases family.

It catalyses the reaction L-glutamate = D-glutamate. The protein operates within cell wall biogenesis; peptidoglycan biosynthesis. Its function is as follows. Provides the (R)-glutamate required for cell wall biosynthesis. The protein is Glutamate racemase of Clostridium botulinum (strain Loch Maree / Type A3).